The sequence spans 201 residues: Imidazole glycerol phosphate synthase subunit HisH (201 aa).

A Glutamine amidotransferase type-1 domain is found at 1–201; it reads MVFIADYGAG…LQVLKNFAEF (201 aa). The Nucleophile role is filled by Cys79. Residues His183 and Glu185 contribute to the active site.

Heterodimer of HisH and HisF.

It is found in the cytoplasm. The catalysed reaction is 5-[(5-phospho-1-deoxy-D-ribulos-1-ylimino)methylamino]-1-(5-phospho-beta-D-ribosyl)imidazole-4-carboxamide + L-glutamine = D-erythro-1-(imidazol-4-yl)glycerol 3-phosphate + 5-amino-1-(5-phospho-beta-D-ribosyl)imidazole-4-carboxamide + L-glutamate + H(+). It catalyses the reaction L-glutamine + H2O = L-glutamate + NH4(+). It functions in the pathway amino-acid biosynthesis; L-histidine biosynthesis; L-histidine from 5-phospho-alpha-D-ribose 1-diphosphate: step 5/9. IGPS catalyzes the conversion of PRFAR and glutamine to IGP, AICAR and glutamate. The HisH subunit catalyzes the hydrolysis of glutamine to glutamate and ammonia as part of the synthesis of IGP and AICAR. The resulting ammonia molecule is channeled to the active site of HisF. The chain is Imidazole glycerol phosphate synthase subunit HisH from Chlorobaculum tepidum (strain ATCC 49652 / DSM 12025 / NBRC 103806 / TLS) (Chlorobium tepidum).